Reading from the N-terminus, the 298-residue chain is Homoserine kinase (298 aa).

Residue 79–89 (PIARGLGSSGA) coordinates ATP.

This sequence belongs to the GHMP kinase family. Homoserine kinase subfamily.

Its subcellular location is the cytoplasm. The catalysed reaction is L-homoserine + ATP = O-phospho-L-homoserine + ADP + H(+). Its pathway is amino-acid biosynthesis; L-threonine biosynthesis; L-threonine from L-aspartate: step 4/5. Catalyzes the ATP-dependent phosphorylation of L-homoserine to L-homoserine phosphate. This chain is Homoserine kinase, found in Pyrobaculum islandicum (strain DSM 4184 / JCM 9189 / GEO3).